The primary structure comprises 580 residues: Phosphomethylpyrimidine synthase (580 aa).

Residues 1–58 (MTPTQNEIHPKHSYSPIRKHGLEVPETEIALDDSPSGPNEPFRIYRTRGPETDPTLGL) are disordered. Substrate contacts are provided by residues N180, M209, Y238, H274, 294 to 296 (SRG), 335 to 338 (DGLR), and E374. Residue H378 participates in Zn(2+) binding. Position 401 (Y401) interacts with substrate. Residue H442 participates in Zn(2+) binding. 3 residues coordinate [4Fe-4S] cluster: C522, C525, and C530. The segment at 554–580 (VGASDSTEGMKEKSREFVAGGGEVYRE) is disordered.

The protein belongs to the ThiC family. [4Fe-4S] cluster serves as cofactor.

The catalysed reaction is 5-amino-1-(5-phospho-beta-D-ribosyl)imidazole + S-adenosyl-L-methionine = 4-amino-2-methyl-5-(phosphooxymethyl)pyrimidine + CO + 5'-deoxyadenosine + formate + L-methionine + 3 H(+). The protein operates within cofactor biosynthesis; thiamine diphosphate biosynthesis. In terms of biological role, catalyzes the synthesis of the hydroxymethylpyrimidine phosphate (HMP-P) moiety of thiamine from aminoimidazole ribotide (AIR) in a radical S-adenosyl-L-methionine (SAM)-dependent reaction. The protein is Phosphomethylpyrimidine synthase of Corynebacterium efficiens (strain DSM 44549 / YS-314 / AJ 12310 / JCM 11189 / NBRC 100395).